The primary structure comprises 230 residues: Fibrillarin-like rRNA/tRNA 2'-O-methyltransferase (230 aa).

S-adenosyl-L-methionine contacts are provided by residues 87 to 88, 105 to 106, 130 to 131, and 150 to 153; these read TT, EF, DA, and DVAQ.

The protein belongs to the methyltransferase superfamily. Fibrillarin family. In terms of assembly, interacts with nop5. Component of box C/D small ribonucleoprotein (sRNP) particles that contain rpl7ae, FlpA and nop5, plus a guide RNA.

Functionally, involved in pre-rRNA and tRNA processing. Utilizes the methyl donor S-adenosyl-L-methionine to catalyze the site-specific 2'-hydroxyl methylation of ribose moieties in rRNA and tRNA. Site specificity is provided by a guide RNA that base pairs with the substrate. Methylation occurs at a characteristic distance from the sequence involved in base pairing with the guide RNA. The chain is Fibrillarin-like rRNA/tRNA 2'-O-methyltransferase from Methanococcus maripaludis (strain C5 / ATCC BAA-1333).